Consider the following 422-residue polypeptide: Ena/VASP-like protein (422 aa).

In terms of domain architecture, WH1 spans 4–118; it reads FEEFSEQSIC…NAMLFALNIM (115 aa). Polar residues predominate over residues 120–135; that stretch reads SQEGGPSSQRQVQNGP. Disordered stretches follow at residues 120 to 139 and 147 to 375; these read SQEGGPSSQRQVQNGPSPDE and VMEQ…PAGS. The residue at position 136 (Ser-136) is a Phosphoserine. Residues 147–163 are compositionally biased toward basic and acidic residues; that stretch reads VMEQHQQQRQESLERRT. Residues 175-186 show a composition bias toward low complexity; it reads PSSAASAPVSCS. Over residues 187 to 212 the composition is skewed to pro residues; the sequence is GPPPPPPPPVPPPPTGATPPPPPPLP. The interval 228–248 is EVH2 block A; sequence GLAAAIAGAKLRRVQRPEDAS. Residues 228–419 form an EVH2 region; it reads GLAAAIAGAK…DAIRQELSGI (192 aa). The KLKR motif lies at 237–240; the sequence is KLRR. The span at 248–259 shows a compositional bias: low complexity; the sequence is SGGSSPSGTSKS. Phosphoserine occurs at positions 252 and 265. The tract at residues 271 to 288 is EVH2 block B; sequence GGLMEEMNKLLAKRRKAA. Over residues 305-326 the composition is skewed to polar residues; that stretch reads EDPSTSPSPGTRAASQPPNSSE. Residues Ser-310, Ser-312, Ser-335, Ser-337, Ser-347, Ser-355, Ser-360, and Ser-375 each carry the phosphoserine modification. Positions 327–337 are enriched in basic and acidic residues; that stretch reads AGRKPWERSNS. Residues 348–368 are required for interaction with ZDHHC17; sequence RTPSVAKSPEAKSPLQSQPHS. The EVH2 block C stretch occupies residues 385–419; sequence DLDRMKQEILEEVVRELHKVKDEIIDAIRQELSGI. A coiled-coil region spans residues 388-414; sequence RMKQEILEEVVRELHKVKDEIIDAIRQ.

Belongs to the Ena/VASP family. In terms of assembly, homotetramer. Binds to the SH3 domains of ABL1, LYN and SRC. Also binds to profilin, with preference for isoform IIa of PFN2, and the WW domain of APBB1/FE65. Binds to SEMA6A. Interacts, via the Pro-rich region, with the C-terminal SH3 domain of DNMBP. Interacts with RAPH1. Binds, via the EVH1 domain, the Pro-rich domain of Listeria monocytogenes actA. Binds, via the EVH1 domain, the Pro-rich domain of ZYX. Interacts with FYB1. Interacts with ZDHHC17. Post-translationally, phosphorylated by PKA; phosphorylation abolishes binding to SH3 domains of ABL and SRC.

It is found in the cytoplasm. The protein localises to the cytoskeleton. Its subcellular location is the stress fiber. It localises to the cell projection. The protein resides in the lamellipodium. In terms of biological role, ena/VASP proteins are actin-associated proteins involved in a range of processes dependent on cytoskeleton remodeling and cell polarity such as axon guidance and lamellipodial and filopodial dynamics in migrating cells. EVL enhances actin nucleation and polymerization. The protein is Ena/VASP-like protein (EVL) of Pongo abelii (Sumatran orangutan).